A 399-amino-acid polypeptide reads, in one-letter code: Methylmalonic aciduria type A homolog, mitochondrial (399 aa).

The N-terminal 15 residues, 1-15, are a transit peptide targeting the mitochondrion; sequence MVVRSLLRVSRLTSA. GTP-binding positions include 131–139, D274, and 310–312; these read GSPGVGKSS and SIM.

Belongs to the SIMIBI class G3E GTPase family. ArgK/MeaB subfamily.

It is found in the mitochondrion. In terms of biological role, may have GTPase activity. May also bind and hydrolyze ATP. May function as chaperone. Likely to have a role in propionyl-CoA and adenosylcobalamin metabolism. The sequence is that of Methylmalonic aciduria type A homolog, mitochondrial (mmaa-1) from Caenorhabditis elegans.